The chain runs to 424 residues: Hemagglutinin-esterase (424 aa).

The signal sequence occupies residues 1–16 (MFLLPRFVLVSCIIGS). The tract at residues 7–127 (FVLVSCIIGS…SNDIWMQNKG (121 aa)) is esterase domain 1. The Virion surface portion of the chain corresponds to 17–392 (LGFDNPPTNV…PICVYDPLPI (376 aa)). The Nucleophile role is filled by Ser40. Residues Cys44 and Cys65 are joined by a disulfide bond. Residues Asn54, Asn89, Asn153, Asn236, and Asn301 are each glycosylated (N-linked (GlcNAc...) asparagine; by host). Intrachain disulfides connect Cys113-Cys162, Cys197-Cys276, and Cys205-Cys249. Positions 128-266 (LFYTQVYKNM…GNYLAISNEL (139 aa)) are receptor binding. Positions 267-379 (LLTVPTKAIC…RCPTAADINT (113 aa)) are esterase domain 2. Cysteines 307 and 312 form a disulfide. The N-linked (GlcNAc...) asparagine; by host glycan is linked to Asn316. Residues Asp326 and His329 each act as charge relay system in the active site. Residues Cys347 and Cys371 are joined by a disulfide bond. N-linked (GlcNAc...) asparagine; by host glycosylation is present at Asn358. Residues 393–413 (IFLGILLGVAVIIIVVLLLYF) form a helical membrane-spanning segment. Topologically, residues 414–424 (MVDNGTRLHDA) are intravirion. The N-linked (GlcNAc...) asparagine; by host glycan is linked to Asn417.

The protein belongs to the influenza type C/coronaviruses hemagglutinin-esterase family. Homodimer; disulfide-linked. Forms a complex with the M protein in the pre-Golgi. Associates then with S-M complex to form a ternary complex S-M-HE. In terms of processing, N-glycosylated in the host RER.

It localises to the virion membrane. It is found in the host cell membrane. The catalysed reaction is N-acetyl-9-O-acetylneuraminate + H2O = N-acetylneuraminate + acetate + H(+). It carries out the reaction N-acetyl-4-O-acetylneuraminate + H2O = N-acetylneuraminate + acetate + H(+). Functionally, structural protein that makes short spikes at the surface of the virus. Contains receptor binding and receptor-destroying activities. Mediates de-O-acetylation of N-acetyl-4-O-acetylneuraminic acid, which is probably the receptor determinant recognized by the virus on the surface of erythrocytes and susceptible cells. This receptor-destroying activity is important for virus release as it probably helps preventing self-aggregation and ensures the efficient spread of the progeny virus from cell to cell. May serve as a secondary viral attachment protein for initiating infection, the spike protein being the major one. May become a target for both the humoral and the cellular branches of the immune system. In Bovine coronavirus (strain Ontario) (BCoV), this protein is Hemagglutinin-esterase.